The sequence spans 159 residues: Cyclic pyranopterin monophosphate synthase (159 aa).

Substrate-binding positions include 75–77 (LCH) and 113–114 (ME). Residue aspartate 128 is part of the active site.

It belongs to the MoaC family. In terms of assembly, homohexamer; trimer of dimers.

The enzyme catalyses (8S)-3',8-cyclo-7,8-dihydroguanosine 5'-triphosphate = cyclic pyranopterin phosphate + diphosphate. Its pathway is cofactor biosynthesis; molybdopterin biosynthesis. Catalyzes the conversion of (8S)-3',8-cyclo-7,8-dihydroguanosine 5'-triphosphate to cyclic pyranopterin monophosphate (cPMP). The polypeptide is Cyclic pyranopterin monophosphate synthase (Cupriavidus metallidurans (strain ATCC 43123 / DSM 2839 / NBRC 102507 / CH34) (Ralstonia metallidurans)).